The sequence spans 186 residues: NADH-quinone oxidoreductase subunit B 2 (186 aa).

The disordered stretch occupies residues methionine 1–methionine 27. The [4Fe-4S] cluster site is built by cysteine 65, cysteine 66, cysteine 130, and cysteine 160.

This sequence belongs to the complex I 20 kDa subunit family. In terms of assembly, NDH-1 is composed of 14 different subunits. Subunits NuoB, C, D, E, F, and G constitute the peripheral sector of the complex. The cofactor is [4Fe-4S] cluster.

It localises to the cell inner membrane. It catalyses the reaction a quinone + NADH + 5 H(+)(in) = a quinol + NAD(+) + 4 H(+)(out). Functionally, NDH-1 shuttles electrons from NADH, via FMN and iron-sulfur (Fe-S) centers, to quinones in the respiratory chain. The immediate electron acceptor for the enzyme in this species is believed to be ubiquinone. Couples the redox reaction to proton translocation (for every two electrons transferred, four hydrogen ions are translocated across the cytoplasmic membrane), and thus conserves the redox energy in a proton gradient. In Rhizobium etli (strain ATCC 51251 / DSM 11541 / JCM 21823 / NBRC 15573 / CFN 42), this protein is NADH-quinone oxidoreductase subunit B 2.